A 2248-amino-acid polypeptide reads, in one-letter code: Putative Polycomb group protein ASXL3 (2248 aa).

The HTH HARE-type domain maps to 10-84 (RTWAEAARLA…KSGLYALKKE (75 aa)). A disordered region spans residues 156-232 (ALKQALRQQQ…GKQTSQHLKR (77 aa)). A compositionally biased stretch (basic and acidic residues) spans 203–216 (KNGEADSSDKEMKH). Residues 219 to 228 (KSPTGKQTSQ) are compositionally biased toward polar residues. The 110-residue stretch at 254 to 363 (PGSILVNTNL…FERFYGEKLG (110 aa)) folds into the DEUBAD domain. Disordered stretches follow at residues 368-414 (ESVK…PASP), 547-583 (TSSMTHVSDTEHKESETAVETSTPKIKTGSSSLEGQF), 607-643 (CISETSFSSESPEGACTSLPSPGGETQSTSEESCTPA), 703-726 (EASPVSNLPLTSETSPMSDLPLTS), 762-853 (ERMA…ASIP), 869-1052 (LQRT…TGAR), 1123-1152 (TSKETRLPPPLSSKEGPPNLEVSSTPETKM), 1183-1203 (QQSLNPSKLPETATDLSVHSS), 1431-1462 (KLSAESLDKNSGPRNRADNSGKPQQPPGGFAP), 1573-1596 (TAPSHNFAEQARGPAPFKSEADTT), and 1990-2068 (LSPN…KRLS). Polar residues-rich tracts occupy residues 371-389 (KLTTGPNNAGAQSSSSCGT), 395-407 (SAQTALAEQQPKS), 564-580 (AVETSTPKIKTGSSSLE), 607-617 (CISETSFSSES), and 624-643 (SLPSPGGETQSTSEESCTPA). Residues 796-818 (NLTSQQKNLSNTPEPIIMSSSSI) show a composition bias toward polar residues. Over residues 937–949 (SHTSKSSEPSKSP) the composition is skewed to low complexity. Basic and acidic residues-rich tracts occupy residues 950–968 (DGIRNESRDSEISKRKTAE), 975–987 (CKEKRARIEDDQS), and 997–1008 (PEKEQPPREEPR). The span at 1036–1046 (RASTSTSVSGG) shows a compositional bias: polar residues. Over residues 2016 to 2046 (HPPPPPPPPPPPPLALPPPPPPPPPLPPPLP) the composition is skewed to pro residues. The PHD-type; atypical zinc-finger motif lies at 2210–2247 (ELKCSCRLKAMIVCKGCGAFCHDDCIGPSKLCVACLVV).

It belongs to the Asx family. Core component of the polycomb repressive deubiquitinase (PR-DUB) complex, at least composed of BAP1, one of ASXL1, ASXL2 or (probably) ASXL3, and one of MBD5 or MBD6. Distinct combinations of ASXL and MBD proteins may preferentially bind specific histone modification marks. The PR-DUB core associates with a number of accessory proteins, including FOXK1, FOXK2, KDM1B, HCFC1 and OGT; KDM1B specifically associates with ASXL2 PR-DUB complexes. Interacts (via PHD domain) with MBD5 and MBD6 (via MBD domain); the interaction is probably direct and mediates association of MBD proteins with the PR-DUB core. As to expression, expressed in pancreatic islets, testis, neuroblastoma, head and neck tumor.

Its subcellular location is the nucleus. In terms of biological role, putative Polycomb group (PcG) protein. PcG proteins act by forming multiprotein complexes, which are required to maintain the transcriptionally repressive state of homeotic genes throughout development. PcG proteins are not required to initiate repression, but to maintain it during later stages of development. They probably act via methylation of histones, rendering chromatin heritably changed in its expressibility. Non-catalytic component of the PR-DUB complex, a complex that specifically mediates deubiquitination of histone H2A monoubiquitinated at 'Lys-119' (H2AK119ub1). The PR-DUB complex is an epigenetic regulator of gene expression and acts as a transcriptional coactivator, affecting genes involved in development, cell communication, signaling, cell proliferation and cell viability. ASXL1, ASXL2 and ASXL3 function redundantly in the PR-DUB complex and are essential for chromatin recruitment and transcriptional activation of associated genes. This Homo sapiens (Human) protein is Putative Polycomb group protein ASXL3 (ASXL3).